The primary structure comprises 256 residues: Non-specific lipid transfer protein GPI-anchored 23 (256 aa).

The signal sequence occupies residues 1–21 (MKPSFVLLSIVLLLSSSLSDA). Asparagine 41 carries N-linked (GlcNAc...) asparagine glycosylation. 4 cysteine pairs are disulfide-bonded: cysteine 45-cysteine 88, cysteine 55-cysteine 72, cysteine 73-cysteine 113, and cysteine 86-cysteine 121. Positions 125 to 230 (TPAASTPVSP…SPSPSPSPSI (106 aa)) are disordered. A compositionally biased stretch (low complexity) spans 138-230 (SPTTSPSSAK…SPSPSPSPSI (93 aa)). Serine 225 carries the GPI-anchor amidated serine lipid modification. Positions 226–256 (PSPSISSSGILLVSKLFIAVVMVSSFLYILA) are cleaved as a propeptide — removed in mature form.

This sequence belongs to the plant LTP family. Confined to the anthers of the inflorescence.

It localises to the cell membrane. In terms of biological role, probable lipid transfer protein. The chain is Non-specific lipid transfer protein GPI-anchored 23 from Arabidopsis thaliana (Mouse-ear cress).